The sequence spans 60 residues: Large ribosomal subunit protein bL32 (60 aa).

A compositionally biased stretch (basic residues) spans 1 to 16 (MAVPRRKTSPSRRGMR). The segment at 1 to 60 (MAVPRRKTSPSRRGMRRSADALKRPTYAEDKDSGELRRPHHLDLKTGMYKGRQVIKKKDA) is disordered. The span at 17–44 (RSADALKRPTYAEDKDSGELRRPHHLDL) shows a compositional bias: basic and acidic residues.

Belongs to the bacterial ribosomal protein bL32 family.

In Rhodopseudomonas palustris (strain BisB5), this protein is Large ribosomal subunit protein bL32.